The sequence spans 285 residues: Pantothenate synthetase (285 aa).

30-37 (MGNLHDGH) is an ATP binding site. Histidine 37 serves as the catalytic Proton donor. Glutamine 61 lines the (R)-pantoate pocket. Glutamine 61 lines the beta-alanine pocket. 148–151 (GEKD) contributes to the ATP binding site. Glutamine 154 lines the (R)-pantoate pocket. 185-188 (RSSR) is a binding site for ATP.

It belongs to the pantothenate synthetase family. As to quaternary structure, homodimer.

The protein resides in the cytoplasm. It catalyses the reaction (R)-pantoate + beta-alanine + ATP = (R)-pantothenate + AMP + diphosphate + H(+). It participates in cofactor biosynthesis; (R)-pantothenate biosynthesis; (R)-pantothenate from (R)-pantoate and beta-alanine: step 1/1. Catalyzes the condensation of pantoate with beta-alanine in an ATP-dependent reaction via a pantoyl-adenylate intermediate. In Alcanivorax borkumensis (strain ATCC 700651 / DSM 11573 / NCIMB 13689 / SK2), this protein is Pantothenate synthetase.